The sequence spans 337 residues: Holliday junction branch migration complex subunit RuvB (337 aa).

Positions 1-179 are large ATPase domain (RuvB-L); sequence MTHQVSVLHQ…FSFTGRMSYY (179 aa). ATP-binding positions include leucine 18, arginine 19, glycine 60, lysine 63, threonine 64, serine 65, 126-128, arginine 169, tyrosine 179, and arginine 216; that span reads EDY. Residue threonine 64 participates in Mg(2+) binding. A small ATPAse domain (RuvB-S) region spans residues 180–250; it reads SDEDLTTILK…VAEKALAMLL (71 aa). Residues 253–337 form a head domain (RuvB-H) region; it reads DWGLNEIDIK…DNLQSLGEEK (85 aa). DNA-binding residues include lysine 308 and arginine 313.

Belongs to the RuvB family. In terms of assembly, homohexamer. Forms an RuvA(8)-RuvB(12)-Holliday junction (HJ) complex. HJ DNA is sandwiched between 2 RuvA tetramers; dsDNA enters through RuvA and exits via RuvB. An RuvB hexamer assembles on each DNA strand where it exits the tetramer. Each RuvB hexamer is contacted by two RuvA subunits (via domain III) on 2 adjacent RuvB subunits; this complex drives branch migration. In the full resolvosome a probable DNA-RuvA(4)-RuvB(12)-RuvC(2) complex forms which resolves the HJ.

It localises to the cytoplasm. The catalysed reaction is ATP + H2O = ADP + phosphate + H(+). Its function is as follows. The RuvA-RuvB-RuvC complex processes Holliday junction (HJ) DNA during genetic recombination and DNA repair, while the RuvA-RuvB complex plays an important role in the rescue of blocked DNA replication forks via replication fork reversal (RFR). RuvA specifically binds to HJ cruciform DNA, conferring on it an open structure. The RuvB hexamer acts as an ATP-dependent pump, pulling dsDNA into and through the RuvAB complex. RuvB forms 2 homohexamers on either side of HJ DNA bound by 1 or 2 RuvA tetramers; 4 subunits per hexamer contact DNA at a time. Coordinated motions by a converter formed by DNA-disengaged RuvB subunits stimulates ATP hydrolysis and nucleotide exchange. Immobilization of the converter enables RuvB to convert the ATP-contained energy into a lever motion, pulling 2 nucleotides of DNA out of the RuvA tetramer per ATP hydrolyzed, thus driving DNA branch migration. The RuvB motors rotate together with the DNA substrate, which together with the progressing nucleotide cycle form the mechanistic basis for DNA recombination by continuous HJ branch migration. Branch migration allows RuvC to scan DNA until it finds its consensus sequence, where it cleaves and resolves cruciform DNA. This Chlamydia caviae (strain ATCC VR-813 / DSM 19441 / 03DC25 / GPIC) (Chlamydophila caviae) protein is Holliday junction branch migration complex subunit RuvB.